A 447-amino-acid polypeptide reads, in one-letter code: Protein king tubby (447 aa).

Residues 54–84 (GSPQNPDQILSNNSSSITMNSSRNNSNNMRS) form a disordered region. The span at 62-84 (ILSNNSSSITMNSSRNNSNNMRS) shows a compositional bias: low complexity. A Phosphoserine modification is found at S136. Positions 168 to 182 (EGAAMEGSNGAANGS) are enriched in low complexity. A disordered region spans residues 168-191 (EGAAMEGSNGAANGSGSVGGSGES).

It belongs to the TUB family.

It localises to the cytoplasm. Its subcellular location is the nucleus. The protein resides in the cell projection. The protein localises to the cilium membrane. It is found in the rhabdomere. This chain is Protein king tubby, found in Drosophila grimshawi (Hawaiian fruit fly).